The chain runs to 111 residues: Gene 81 protein (111 aa).

The sequence is that of Gene 81 protein (81) from Mycobacterium (Mycobacteriophage L5).